The sequence spans 60 residues: UPF0434 protein YcaR (60 aa).

Belongs to the UPF0434 family.

This chain is UPF0434 protein YcaR, found in Escherichia coli O81 (strain ED1a).